Reading from the N-terminus, the 203-residue chain is ATP-dependent Clp protease proteolytic subunit (203 aa).

Serine 100 acts as the Nucleophile in catalysis. The active site involves histidine 125.

The protein belongs to the peptidase S14 family. As to quaternary structure, fourteen ClpP subunits assemble into 2 heptameric rings which stack back to back to give a disk-like structure with a central cavity, resembling the structure of eukaryotic proteasomes.

Its subcellular location is the cytoplasm. The catalysed reaction is Hydrolysis of proteins to small peptides in the presence of ATP and magnesium. alpha-casein is the usual test substrate. In the absence of ATP, only oligopeptides shorter than five residues are hydrolyzed (such as succinyl-Leu-Tyr-|-NHMec, and Leu-Tyr-Leu-|-Tyr-Trp, in which cleavage of the -Tyr-|-Leu- and -Tyr-|-Trp bonds also occurs).. Cleaves peptides in various proteins in a process that requires ATP hydrolysis. Has a chymotrypsin-like activity. Plays a major role in the degradation of misfolded proteins. This Anaeromyxobacter sp. (strain K) protein is ATP-dependent Clp protease proteolytic subunit.